The sequence spans 647 residues: Beta-glucosidase-like SFR2, chloroplastic (647 aa).

The segment at 116–140 (SAAGDGGSQQSWRSTGGENIGDREQ) is disordered. Residues 123 to 132 (SQQSWRSTGG) are compositionally biased toward polar residues. Asn-169 is a glycosylation site (N-linked (GlcNAc...) asparagine). Residues His-258, 302 to 303 (NE), Tyr-414, Glu-466, Trp-504, 511 to 512 (EW), and Phe-520 each bind a beta-D-glucoside. Glu-303 (proton donor) is an active-site residue. Catalysis depends on Glu-466, which acts as the Nucleophile.

The protein belongs to the glycosyl hydrolase 1 family.

It is found in the plastid. The protein localises to the chloroplast outer membrane. It carries out the reaction 2 a 1,2-diacyl-3-O-(beta-D-galactosyl)-sn-glycerol = a 1,2-diacyl-3-O-[beta-D-galactosyl-(1-&gt;6)-beta-D-galactosyl]-sn-glycerol + a 1,2-diacyl-sn-glycerol. In terms of biological role, galactosyltransferase synthesizing digalactosyldiacylglycerol from monogalactosyldiacylglycerol in the absence of UDP-galactose. Potentially involved in freezing tolerance. The protein is Beta-glucosidase-like SFR2, chloroplastic of Oryza sativa subsp. japonica (Rice).